A 1106-amino-acid polypeptide reads, in one-letter code: Communication mutant protein F (1106 aa).

The first 28 residues, 1 to 28 (MKIYKKNHFLKILIIFIYLSCNILKVNA), serve as a signal peptide directing secretion. One can recognise a G8 domain in the interval 254–380 (TIWPNGVVPS…YHNTWSKLAS (127 aa)). N-linked (GlcNAc...) asparagine glycans are attached at residues Asn-267, Asn-306, Asn-512, Asn-536, Asn-677, Asn-715, and Asn-833.

The protein belongs to the comF family.

The protein resides in the secreted. This Dictyostelium discoideum (Social amoeba) protein is Communication mutant protein F (comF-1).